Consider the following 392-residue polypeptide: Chloramphenicol resistance protein (392 aa).

The next 12 membrane-spanning stretches (helical) occupy residues 6–26 (YLLAVAVCAMGTSEFMLAGLV), 42–62 (TLTSAFATGMIVGAPLVAALA), 71–91 (LLGFILAFAAAHAVGAGTTSF), 100–120 (VAALANAGFLAVALTTAAALV), 129–149 (LAVLLSGTTVATVAGVPGGSL), 160–180 (FWAVAVCCLPAAFGVLKAIPA), 205–225 (LLLAMLLGALVNAATFASFTF), 239–259 (LWISVALVLFGAGSFAGVTVA), 268–288 (AQVLAVAGPLLLVGWPALAML), 294–314 (ALLTLVFVQGALSFALGSTLI), 332–352 (ATAALNVGAAAGPLVAATTLG), and 358–378 (LGPLWASGLLVAVALLVAFPF).

The protein belongs to the major facilitator superfamily.

The protein resides in the cell membrane. The protein is Chloramphenicol resistance protein (cmlR) of Streptomyces lividans.